A 640-amino-acid polypeptide reads, in one-letter code: ATP-dependent DNA helicase YoaA (640 aa).

Positions 16–278 constitute a Helicase ATP-binding domain; sequence ELSQNIKGFR…KDMQQLGTTS (263 aa). 51–58 contributes to the ATP binding site; it reads AGTGTGKT. C114 contributes to the [4Fe-4S] cluster binding site. The short motif at 125–128 is the DEAH box element; sequence GVLG. [4Fe-4S] cluster is bound by residues C174, C179, and C185. Positions 231 to 234 match the DEAH box motif; sequence DEAH. Positions 458 to 634 constitute a Helicase C-terminal domain; the sequence is SLGEILLPVI…SRTRDLNKVI (177 aa).

This sequence belongs to the helicase family. DinG subfamily. The cofactor is [4Fe-4S] cluster.

It catalyses the reaction Couples ATP hydrolysis with the unwinding of duplex DNA at the replication fork by translocating in the 5'-3' direction. This creates two antiparallel DNA single strands (ssDNA). The leading ssDNA polymer is the template for DNA polymerase III holoenzyme which synthesizes a continuous strand.. The catalysed reaction is ATP + H2O = ADP + phosphate + H(+). Probably a 5'-3' DNA helicase. The protein is ATP-dependent DNA helicase YoaA of Haemophilus influenzae (strain ATCC 51907 / DSM 11121 / KW20 / Rd).